The chain runs to 201 residues: Large ribosomal subunit protein uL4 (201 aa).

A disordered region spans residues Glu-51 to Val-73.

It belongs to the universal ribosomal protein uL4 family. Part of the 50S ribosomal subunit.

Its function is as follows. One of the primary rRNA binding proteins, this protein initially binds near the 5'-end of the 23S rRNA. It is important during the early stages of 50S assembly. It makes multiple contacts with different domains of the 23S rRNA in the assembled 50S subunit and ribosome. In terms of biological role, forms part of the polypeptide exit tunnel. This chain is Large ribosomal subunit protein uL4, found in Erwinia tasmaniensis (strain DSM 17950 / CFBP 7177 / CIP 109463 / NCPPB 4357 / Et1/99).